The sequence spans 641 residues: Putative ABC transporter ATP-binding protein MA_0870 (641 aa).

The region spanning 10–250 is the ABC transporter 1 domain; it reads IEIKDLWYTY…IEVFHRLGLR (241 aa). 44 to 51 provides a ligand contact to ATP; it reads GPTGCGKS. Residues 286–332 form a disordered region; sequence VKTPRNFSNPEEETGRRTDPAERNEFVNTGSGNIKYGDNRSENKGSE. 2 stretches are compositionally biased toward basic and acidic residues: residues 298-310 and 322-332; these read ETGR…ERNE and GDNRSENKGSE. Residues 338–566 enclose the ABC transporter 2 domain; the sequence is ISIRDLWSGY…IEILKQASLT (229 aa). 371–378 provides a ligand contact to ATP; that stretch reads GTNGSGKS.

The protein belongs to the ABC transporter superfamily.

It localises to the cell membrane. Functionally, probably part of an ABC transporter complex. Responsible for energy coupling to the transport system. The protein is Putative ABC transporter ATP-binding protein MA_0870 of Methanosarcina acetivorans (strain ATCC 35395 / DSM 2834 / JCM 12185 / C2A).